Here is an 89-residue protein sequence, read N- to C-terminus: Cell division topological specificity factor (89 aa).

It belongs to the MinE family.

In terms of biological role, prevents the cell division inhibition by proteins MinC and MinD at internal division sites while permitting inhibition at polar sites. This ensures cell division at the proper site by restricting the formation of a division septum at the midpoint of the long axis of the cell. This is Cell division topological specificity factor from Janthinobacterium sp. (strain Marseille) (Minibacterium massiliensis).